Consider the following 241-residue polypeptide: 2-C-methyl-D-erythritol 4-phosphate cytidylyltransferase (241 aa).

The protein belongs to the IspD/TarI cytidylyltransferase family. IspD subfamily.

The catalysed reaction is 2-C-methyl-D-erythritol 4-phosphate + CTP + H(+) = 4-CDP-2-C-methyl-D-erythritol + diphosphate. Its pathway is isoprenoid biosynthesis; isopentenyl diphosphate biosynthesis via DXP pathway; isopentenyl diphosphate from 1-deoxy-D-xylulose 5-phosphate: step 2/6. Catalyzes the formation of 4-diphosphocytidyl-2-C-methyl-D-erythritol from CTP and 2-C-methyl-D-erythritol 4-phosphate (MEP). The sequence is that of 2-C-methyl-D-erythritol 4-phosphate cytidylyltransferase from Mycobacterium leprae (strain Br4923).